A 206-amino-acid polypeptide reads, in one-letter code: Large ribosomal subunit protein uL4 (206 aa).

It belongs to the universal ribosomal protein uL4 family. As to quaternary structure, part of the 50S ribosomal subunit.

Its function is as follows. One of the primary rRNA binding proteins, this protein initially binds near the 5'-end of the 23S rRNA. It is important during the early stages of 50S assembly. It makes multiple contacts with different domains of the 23S rRNA in the assembled 50S subunit and ribosome. Forms part of the polypeptide exit tunnel. This chain is Large ribosomal subunit protein uL4, found in Methylobacterium radiotolerans (strain ATCC 27329 / DSM 1819 / JCM 2831 / NBRC 15690 / NCIMB 10815 / 0-1).